The following is a 221-amino-acid chain: Thiol:disulfide interchange protein TlpA (221 aa).

Over 1–11 (MLDTKPSATRR) the chain is Cytoplasmic. Residues 12 to 35 (IPLVIATVAVGGLAGFAALYGLGL) form a helical membrane-spanning segment. Over 36–221 (SRAPTGDPAC…AATGKAAAAL (186 aa)) the chain is Periplasmic. 2 disulfides stabilise this stretch: cysteine 45–cysteine 190 and cysteine 107–cysteine 110. In terms of domain architecture, Thioredoxin spans 69-215 (ASAPLKLPDL…ALKLIRAATG (147 aa)).

The protein belongs to the thioredoxin family. As to quaternary structure, monomer.

The protein resides in the cell membrane. In terms of biological role, involved in cytochrome aa3 assembly. This is Thiol:disulfide interchange protein TlpA (tlpA) from Bradyrhizobium diazoefficiens (strain JCM 10833 / BCRC 13528 / IAM 13628 / NBRC 14792 / USDA 110).